The primary structure comprises 96 residues: SAGA-associated factor 11 (96 aa).

Residues 68–89 form an SGF11-type zinc finger; it reads FHCKNCGRDVSANRFAAHLQRC.

It belongs to the SGF11 family. As to quaternary structure, component of the 1.8 MDa SAGA transcription coactivator-HAT complex. SAGA is built of 5 distinct domains with specialized functions. Within the SAGA complex, SUS1, SGF11, SGF73 and UBP8 form an additional subcomplex of SAGA called the DUB module (deubiquitination module). Interacts directly with SGF73, SUS1 and UBP8.

The protein localises to the nucleus. Its function is as follows. Functions as a component of the transcription regulatory histone acetylation (HAT) complex SAGA. At the promoters, SAGA is required for recruitment of the basal transcription machinery. It influences RNA polymerase II transcriptional activity through different activities such as TBP interaction and promoter selectivity, interaction with transcription activators, and chromatin modification through histone acetylation and deubiquitination. SAGA acetylates nucleosomal histone H3 to some extent (to form H3K9ac, H3K14ac, H3K18ac and H3K23ac). SAGA interacts with DNA via upstream activating sequences (UASs). Involved in transcriptional regulation of a subset of SAGA-regulated genes. Within the SAGA complex, participates in a subcomplex, that specifically deubiquitinates histones H2B. The polypeptide is SAGA-associated factor 11 (Vanderwaltozyma polyspora (strain ATCC 22028 / DSM 70294 / BCRC 21397 / CBS 2163 / NBRC 10782 / NRRL Y-8283 / UCD 57-17) (Kluyveromyces polysporus)).